The primary structure comprises 89 residues: uncharacterized protein (89 aa).

Residues 1–89 (MEKYEKAAEI…KEIIKLVDEL (89 aa)) enclose the HTH arsR-type domain.

This is an uncharacterized protein from Methanocaldococcus jannaschii (strain ATCC 43067 / DSM 2661 / JAL-1 / JCM 10045 / NBRC 100440) (Methanococcus jannaschii).